We begin with the raw amino-acid sequence, 241 residues long: Glycerol-3-phosphate acyltransferase (241 aa).

6 helical membrane-spanning segments follow: residues 3–23 (ILYS…LLGS), 63–83 (IVFA…SAIV), 97–117 (YISP…PAYY), 131–151 (LIIS…LLVV), 156–176 (IVSL…WMPW), and 198–218 (LVNY…LVLV).

Belongs to the PlsY family. Probably interacts with PlsX.

It is found in the cell membrane. The enzyme catalyses an acyl phosphate + sn-glycerol 3-phosphate = a 1-acyl-sn-glycero-3-phosphate + phosphate. Its pathway is lipid metabolism; phospholipid metabolism. Catalyzes the transfer of an acyl group from acyl-phosphate (acyl-PO(4)) to glycerol-3-phosphate (G3P) to form lysophosphatidic acid (LPA). This enzyme utilizes acyl-phosphate as fatty acyl donor, but not acyl-CoA or acyl-ACP. In Mycoplasmopsis agalactiae (strain NCTC 10123 / CIP 59.7 / PG2) (Mycoplasma agalactiae), this protein is Glycerol-3-phosphate acyltransferase.